Here is a 394-residue protein sequence, read N- to C-terminus: MQTTPVSRKTAWLRVLMLAIAAFIFNTTEFVPVGLLSDIGSSFSMQTAQVGLMLTIYAWVVALMSLPMMLLTRNVERRMLLMIIFVMFVASHALSSVAWDFTTLLISRIGIALSHAIFWSITASLAIRVAPQGKKTQALSMMATGTALAMVLGLPIGRMIGQLLGWRITFAVIGAVAFVTMLLLLKLLPKLPSEHTGSLKSVPMLFRRPALVALYLLIAITVTAHYTAYSYIEPFIQSVAGLSGGFTTFLLLIFGAAGIVGSVLFSIYGNKFPATFLLAAIGLITLSMMCLYVSATHTLAVSTLCVIWGIAVMVMGLAVQVRVLALAPDATDVAMSLLSGIYNIGIGAGALLGGQVSLHLNMASVGYVGGAIGILSLLWCAWSMKRHPQLRLNG.

A run of 12 helical transmembrane segments spans residues 15–35 (VLML…PVGL), 50–70 (VGLM…PMML), 79–99 (MLLM…SVAW), 109–129 (IGIA…AIRV), 137–157 (QALS…LPIG), 168–188 (ITFA…LKLL), 209–229 (PALV…YTAY), 249–269 (FLLL…SIYG), 272–292 (FPAT…MCLY), 299–319 (LAVS…GLAV), 333–353 (VAMS…ALLG), and 362–382 (MASV…WCAW).

This sequence belongs to the major facilitator superfamily. SotB (TC 2.A.1.2) family.

It is found in the cell inner membrane. Involved in the efflux of sugars. The physiological role may be the reduction of the intracellular concentration of toxic sugars or sugar metabolites. In Erwinia tasmaniensis (strain DSM 17950 / CFBP 7177 / CIP 109463 / NCPPB 4357 / Et1/99), this protein is Probable sugar efflux transporter.